The primary structure comprises 399 residues: Probable peptidoglycan glycosyltransferase FtsW (399 aa).

Helical transmembrane passes span 33–53 (LVWLTLGLFSVGLIMVISTSI), 71–91 (IFYFFLIFLLSFIFLRTPIIF), 98–118 (IILIISIVLLVLVLLIGHSIH), 160–180 (FWGFFKPMSVIITQSMLLLAE), 182–202 (DLGTVVVLFFTTISVLFLSGA), 204–224 (IGQFFIIITVSILTIILLILL), 287–307 (IIGEELGYIGSFLILLIIFTI), 324–344 (IFSGFLACSIGIWLSFQTSIN), and 359–379 (LPFISYGGSSLIINSIAIFFL).

The protein belongs to the SEDS family. FtsW subfamily.

It is found in the cell inner membrane. It catalyses the reaction [GlcNAc-(1-&gt;4)-Mur2Ac(oyl-L-Ala-gamma-D-Glu-L-Lys-D-Ala-D-Ala)](n)-di-trans,octa-cis-undecaprenyl diphosphate + beta-D-GlcNAc-(1-&gt;4)-Mur2Ac(oyl-L-Ala-gamma-D-Glu-L-Lys-D-Ala-D-Ala)-di-trans,octa-cis-undecaprenyl diphosphate = [GlcNAc-(1-&gt;4)-Mur2Ac(oyl-L-Ala-gamma-D-Glu-L-Lys-D-Ala-D-Ala)](n+1)-di-trans,octa-cis-undecaprenyl diphosphate + di-trans,octa-cis-undecaprenyl diphosphate + H(+). It participates in cell wall biogenesis; peptidoglycan biosynthesis. Functionally, peptidoglycan polymerase that is essential for cell division. This Buchnera aphidicola subsp. Acyrthosiphon pisum (strain APS) (Acyrthosiphon pisum symbiotic bacterium) protein is Probable peptidoglycan glycosyltransferase FtsW.